The following is a 538-amino-acid chain: Putative cysteine ligase BshC (538 aa).

Positions 460–485 form a coiled coil; that stretch reads KINEQIELLERMLKRNIEKKHEVELN.

Belongs to the BshC family.

Involved in bacillithiol (BSH) biosynthesis. May catalyze the last step of the pathway, the addition of cysteine to glucosamine malate (GlcN-Mal) to generate BSH. In Bacillus cereus (strain Q1), this protein is Putative cysteine ligase BshC.